Reading from the N-terminus, the 159-residue chain is 3-hydroxyacyl-[acyl-carrier-protein] dehydratase FabZ (159 aa).

Residue histidine 58 is part of the active site.

The protein belongs to the thioester dehydratase family. FabZ subfamily.

Its subcellular location is the cytoplasm. It catalyses the reaction a (3R)-hydroxyacyl-[ACP] = a (2E)-enoyl-[ACP] + H2O. Its function is as follows. Involved in unsaturated fatty acids biosynthesis. Catalyzes the dehydration of short chain beta-hydroxyacyl-ACPs and long chain saturated and unsaturated beta-hydroxyacyl-ACPs. The sequence is that of 3-hydroxyacyl-[acyl-carrier-protein] dehydratase FabZ from Helicobacter pylori (strain P12).